The following is a 96-amino-acid chain: Co-chaperonin GroES (96 aa).

The protein belongs to the GroES chaperonin family. As to quaternary structure, heptamer of 7 subunits arranged in a ring. Interacts with the chaperonin GroEL.

It is found in the cytoplasm. In terms of biological role, together with the chaperonin GroEL, plays an essential role in assisting protein folding. The GroEL-GroES system forms a nano-cage that allows encapsulation of the non-native substrate proteins and provides a physical environment optimized to promote and accelerate protein folding. GroES binds to the apical surface of the GroEL ring, thereby capping the opening of the GroEL channel. The chain is Co-chaperonin GroES from Vibrio campbellii (strain ATCC BAA-1116).